A 444-amino-acid polypeptide reads, in one-letter code: 1,4-beta-D-glucan glucohydrolase (444 aa).

The Proton donor role is filled by Glu-164. The Nucleophile role is filled by Glu-349.

This sequence belongs to the glycosyl hydrolase 1 family. In terms of assembly, monomer.

It catalyses the reaction Hydrolysis of (1-&gt;4)-linkages in (1-&gt;4)-beta-D-glucans, to remove successive glucose units.. It carries out the reaction Hydrolysis of terminal, non-reducing beta-D-glucosyl residues with release of beta-D-glucose.. It functions in the pathway glycan metabolism; cellulose degradation. The protein operates within glycan metabolism; beta-D-glucan degradation. Activated by glucose up to 200 mM when p-nitrophenyl-beta-glucoside is used as the substrate. This activation by end product concentrations may be due to a transglycosylation activity of the enzyme. Functionally, broad substrate specificity glycosidase. Releases glucose from soluble glucooligomers, with a preference for longer oligomers; acts more readily on cellotetraose than on cellobiose. Displays similar activities towards the disaccharides lactose and cellobiose. Is also able to hydrolyze various aryl-beta-glycosides in vitro. The protein is 1,4-beta-D-glucan glucohydrolase of Thermotoga neapolitana (strain ATCC 49049 / DSM 4359 / NBRC 107923 / NS-E).